Here is a 138-residue protein sequence, read N- to C-terminus: Large ribosomal subunit protein mL54 (138 aa).

Residues 1 to 14 constitute a mitochondrion transit peptide; the sequence is MATKRLFGATRTWA.

The protein belongs to the mitochondrion-specific ribosomal protein mL54 family. Component of the mitochondrial large ribosomal subunit (mt-LSU). Mature mammalian 55S mitochondrial ribosomes consist of a small (28S) and a large (39S) subunit. The 28S small subunit contains a 12S ribosomal RNA (12S mt-rRNA) and 30 different proteins. The 39S large subunit contains a 16S rRNA (16S mt-rRNA), a copy of mitochondrial valine transfer RNA (mt-tRNA(Val)), which plays an integral structural role, and 52 different proteins.

It localises to the mitochondrion. The polypeptide is Large ribosomal subunit protein mL54 (MRPL54) (Homo sapiens (Human)).